The sequence spans 96 residues: Evasin P1100 (96 aa).

An N-terminal signal peptide occupies residues 1-28; it reads MAFNVITFLQFSVFVVILFNINLHSASA. Disulfide bonds link cysteine 48–cysteine 67, cysteine 52–cysteine 69, and cysteine 63–cysteine 80. Asparagine 51 carries an N-linked (GlcNAc...) asparagine glycan. N-linked (GlcNAc...) asparagine glycosylation occurs at asparagine 74.

Its subcellular location is the secreted. Functionally, salivary chemokine-binding protein which binds to host chemokines CXCL1, CXCL2, CXCL3, CXCL5, CXCL6, CXCL10, CXCL11 and CXCL13. In Ixodes ricinus (Common tick), this protein is Evasin P1100.